The following is a 351-amino-acid chain: Putative [LysW]-L-2-aminoadipate/[LysW]-L-glutamate phosphate reductase (351 aa).

NADP(+)-binding positions include 9 to 12 (SGFV) and 33 to 35 (SRR). The active site involves Cys150. NADP(+) is bound at residue Asn318.

It belongs to the NAGSA dehydrogenase family. Type 1 subfamily. LysY sub-subfamily.

It localises to the cytoplasm. It catalyses the reaction [amino-group carrier protein]-C-terminal-N-(1-carboxy-5-oxopentan-1-yl)-L-glutamine + phosphate + NADP(+) = [amino-group carrier protein]-C-terminal-N-(1-carboxy-5-phosphooxy-5-oxopentan-1-yl)-L-glutamine + NADPH + H(+). The enzyme catalyses [amino-group carrier protein]-C-terminal-gamma-(L-glutamyl-5-semialdehyde)-L-glutamate + phosphate + NADP(+) = [amino-group carrier protein]-C-terminal-gamma-(5-phospho-L-glutamyl)-L-glutamate + NADPH + H(+). The protein operates within amino-acid biosynthesis; L-lysine biosynthesis via AAA pathway; L-lysine from L-alpha-aminoadipate (Thermus route): step 3/5. Its pathway is amino-acid biosynthesis; L-arginine biosynthesis. Involved in both the arginine and lysine biosynthetic pathways. This is Putative [LysW]-L-2-aminoadipate/[LysW]-L-glutamate phosphate reductase from Pyrobaculum aerophilum (strain ATCC 51768 / DSM 7523 / JCM 9630 / CIP 104966 / NBRC 100827 / IM2).